The chain runs to 882 residues: Translation initiation factor IF-2 (882 aa).

Disordered stretches follow at residues 95-176 (PSVT…ASSL) and 229-289 (EHAR…SALQ). Polar residues predominate over residues 116-133 (TKNTFSQESLNKTSPQKS). Composition is skewed to basic and acidic residues over residues 137–172 (KAIE…REAE) and 229–246 (EHAR…EGDR). Basic residues predominate over residues 247-262 (RSRHRGTKTTKQKKTN). Residues 263-276 (KLSESKTDREEARA) show a composition bias toward basic and acidic residues. The tr-type G domain maps to 382–551 (HRAPVVTIMG…LLQAEVLELK (170 aa)). Residues 391 to 398 (GHVDHGKT) form a G1 region. Residue 391-398 (GHVDHGKT) participates in GTP binding. The G2 stretch occupies residues 416–420 (GITQH). The interval 437 to 440 (DTPG) is G3. GTP is bound by residues 437-441 (DTPGH) and 491-494 (NKID). A G4 region spans residues 491–494 (NKID). Residues 527–529 (SAK) are G5.

The protein belongs to the TRAFAC class translation factor GTPase superfamily. Classic translation factor GTPase family. IF-2 subfamily.

The protein resides in the cytoplasm. Functionally, one of the essential components for the initiation of protein synthesis. Protects formylmethionyl-tRNA from spontaneous hydrolysis and promotes its binding to the 30S ribosomal subunits. Also involved in the hydrolysis of GTP during the formation of the 70S ribosomal complex. The protein is Translation initiation factor IF-2 of Hamiltonella defensa subsp. Acyrthosiphon pisum (strain 5AT).